The chain runs to 364 residues: DNA primase large subunit PriL (364 aa).

The [4Fe-4S] cluster site is built by Cys-237, Cys-309, Cys-318, and Cys-325. The tract at residues 345 to 364 (MQNDNEKGHEEKKEGETPPQ) is disordered.

The protein belongs to the eukaryotic-type primase large subunit family. Heterodimer of a small subunit (PriS) and a large subunit (PriL). [4Fe-4S] cluster serves as cofactor.

Functionally, regulatory subunit of DNA primase, an RNA polymerase that catalyzes the synthesis of short RNA molecules used as primers for DNA polymerase during DNA replication. Stabilizes and modulates the activity of the small subunit, increasing the rate of DNA synthesis, and conferring RNA synthesis capability. The DNA polymerase activity may enable DNA primase to also catalyze primer extension after primer synthesis. May also play a role in DNA repair. This Methanococcoides burtonii (strain DSM 6242 / NBRC 107633 / OCM 468 / ACE-M) protein is DNA primase large subunit PriL.